A 388-amino-acid polypeptide reads, in one-letter code: RNA binding motif protein, X-linked-like-1 (388 aa).

An RRM domain is found at 8-86 (GKLFIGGLNT…KAIKVEQATK (79 aa)). Basic and acidic residues predominate over residues 61-80 (DAKDVARDMNGKSLDGKAIK). A disordered region spans residues 61–388 (DAKDVARDMN…SDRGGGQKQI (328 aa)). K80 is covalently cross-linked (Glycyl lysine isopeptide (Lys-Gly) (interchain with G-Cter in SUMO2)). S88 carries the post-translational modification Phosphoserine. The span at 148 to 161 (RGPPPRSGGPPPKR) shows a compositional bias: pro residues. Composition is skewed to basic and acidic residues over residues 191–212 (PRRE…DGYS) and 238–271 (YTYR…EYSD). The span at 320–332 (SRDSYSSSRSDLY) shows a compositional bias: low complexity. Basic and acidic residues-rich tracts occupy residues 333–344 (SSDRDRVGRQER) and 377–388 (SRSDRGGGQKQI).

The protein resides in the nucleus. RNA-binding protein which may be involved in pre-mRNA splicing. The sequence is that of RNA binding motif protein, X-linked-like-1 (Rbmxl1) from Rattus norvegicus (Rat).